The sequence spans 386 residues: Succinate--CoA ligase [ADP-forming] subunit beta (386 aa).

In terms of domain architecture, ATP-grasp spans 9-244; that stretch reads KAVLRSYGVS…LDEEDAKEIE (236 aa). ATP contacts are provided by residues lysine 46, 53–55, glutamate 99, cysteine 102, and glutamate 107; that span reads GRG. Residues asparagine 199 and aspartate 213 each coordinate Mg(2+). Residues asparagine 264 and 321 to 323 each bind substrate; that span reads GIM.

This sequence belongs to the succinate/malate CoA ligase beta subunit family. As to quaternary structure, heterotetramer of two alpha and two beta subunits. The cofactor is Mg(2+).

It carries out the reaction succinate + ATP + CoA = succinyl-CoA + ADP + phosphate. It catalyses the reaction GTP + succinate + CoA = succinyl-CoA + GDP + phosphate. The protein operates within carbohydrate metabolism; tricarboxylic acid cycle; succinate from succinyl-CoA (ligase route): step 1/1. Its function is as follows. Succinyl-CoA synthetase functions in the citric acid cycle (TCA), coupling the hydrolysis of succinyl-CoA to the synthesis of either ATP or GTP and thus represents the only step of substrate-level phosphorylation in the TCA. The beta subunit provides nucleotide specificity of the enzyme and binds the substrate succinate, while the binding sites for coenzyme A and phosphate are found in the alpha subunit. The polypeptide is Succinate--CoA ligase [ADP-forming] subunit beta (Bacillus anthracis (strain A0248)).